An 84-amino-acid chain; its full sequence is Cytochrome b559 subunit alpha (84 aa).

Over 2–20 (AGTTGERPFSDIITSVRYW) the chain is Cytoplasmic. Residues 21-35 (VIHSITIPALFIAGW) traverse the membrane as a helical segment. Heme is bound at residue H23. Topologically, residues 36–84 (LFVSTGLAYDVFGTPRPDSYYAQEQRSIPLVTDRFEAKQQVETFLEQLK) are lumenal.

The protein belongs to the PsbE/PsbF family. As to quaternary structure, heterodimer of an alpha subunit and a beta subunit. PSII is composed of 1 copy each of membrane proteins PsbA, PsbB, PsbC, PsbD, PsbE, PsbF, PsbH, PsbI, PsbJ, PsbK, PsbL, PsbM, PsbT, PsbX, PsbY, PsbZ, Psb30/Ycf12, peripheral proteins PsbO, CyanoQ (PsbQ), PsbU, PsbV and a large number of cofactors. It forms dimeric complexes. Heme b serves as cofactor.

It localises to the cellular thylakoid membrane. Functionally, this b-type cytochrome is tightly associated with the reaction center of photosystem II (PSII). PSII is a light-driven water:plastoquinone oxidoreductase that uses light energy to abstract electrons from H(2)O, generating O(2) and a proton gradient subsequently used for ATP formation. It consists of a core antenna complex that captures photons, and an electron transfer chain that converts photonic excitation into a charge separation. This Thermostichus vulcanus (Synechococcus vulcanus) protein is Cytochrome b559 subunit alpha.